Here is a 149-residue protein sequence, read N- to C-terminus: MRAVVQRVSRGVVTVGEETVGEIGHGFVVLLGVGREDTPDDAAYLAEKIANLRVFADENGKLNRSVLENGGSVLVVSQFTLFGDCRKGRRPGFSAAAPPERAVELYAEFVRRLAALGVPTAQGRFQEHMEVLIVNDGPVTLILDSRKLF.

The Gly-cisPro motif, important for rejection of L-amino acids signature appears at 137 to 138 (GP).

Belongs to the DTD family. In terms of assembly, homodimer.

The protein resides in the cytoplasm. It catalyses the reaction glycyl-tRNA(Ala) + H2O = tRNA(Ala) + glycine + H(+). The enzyme catalyses a D-aminoacyl-tRNA + H2O = a tRNA + a D-alpha-amino acid + H(+). An aminoacyl-tRNA editing enzyme that deacylates mischarged D-aminoacyl-tRNAs. Also deacylates mischarged glycyl-tRNA(Ala), protecting cells against glycine mischarging by AlaRS. Acts via tRNA-based rather than protein-based catalysis; rejects L-amino acids rather than detecting D-amino acids in the active site. By recycling D-aminoacyl-tRNA to D-amino acids and free tRNA molecules, this enzyme counteracts the toxicity associated with the formation of D-aminoacyl-tRNA entities in vivo and helps enforce protein L-homochirality. The protein is D-aminoacyl-tRNA deacylase of Desulforudis audaxviator (strain MP104C).